We begin with the raw amino-acid sequence, 131 residues long: Fimbrial assembly protein, serogroups C1 and C2 (131 aa).

The polypeptide is Fimbrial assembly protein, serogroups C1 and C2 (fimB) (Dichelobacter nodosus (Bacteroides nodosus)).